The following is a 199-amino-acid chain: Holliday junction branch migration complex subunit RuvA (199 aa).

The interval 1-63 is domain I; that stretch reads MIAYIEGKLA…EDAHTLFGFA (63 aa). Residues 64–142 form a domain II region; the sequence is DLMEKEMFLH…KDALLAGSDS (79 aa). Residues 143–151 form a flexible linker region; it reads KQNFSVSHN. The segment at 151-199 is domain III; sequence NSIRSEALTALITLGFTKTVAEKNLDLILKGNSNSFTLEDLIKQALKMS.

Belongs to the RuvA family. Homotetramer. Forms an RuvA(8)-RuvB(12)-Holliday junction (HJ) complex. HJ DNA is sandwiched between 2 RuvA tetramers; dsDNA enters through RuvA and exits via RuvB. An RuvB hexamer assembles on each DNA strand where it exits the tetramer. Each RuvB hexamer is contacted by two RuvA subunits (via domain III) on 2 adjacent RuvB subunits; this complex drives branch migration. In the full resolvosome a probable DNA-RuvA(4)-RuvB(12)-RuvC(2) complex forms which resolves the HJ.

The protein resides in the cytoplasm. Its function is as follows. The RuvA-RuvB-RuvC complex processes Holliday junction (HJ) DNA during genetic recombination and DNA repair, while the RuvA-RuvB complex plays an important role in the rescue of blocked DNA replication forks via replication fork reversal (RFR). RuvA specifically binds to HJ cruciform DNA, conferring on it an open structure. The RuvB hexamer acts as an ATP-dependent pump, pulling dsDNA into and through the RuvAB complex. HJ branch migration allows RuvC to scan DNA until it finds its consensus sequence, where it cleaves and resolves the cruciform DNA. In Cytophaga hutchinsonii (strain ATCC 33406 / DSM 1761 / CIP 103989 / NBRC 15051 / NCIMB 9469 / D465), this protein is Holliday junction branch migration complex subunit RuvA.